We begin with the raw amino-acid sequence, 143 residues long: Ribonuclease HI (143 aa).

In terms of domain architecture, RNase H type-1 spans 1–136; sequence MQEIEIFCDG…CNSLAKLEAQ (136 aa). Mg(2+) is bound by residues Asp9, Glu47, Asp69, and Asn128.

This sequence belongs to the RNase H family. As to quaternary structure, monomer. Mg(2+) serves as cofactor.

The protein resides in the cytoplasm. It carries out the reaction Endonucleolytic cleavage to 5'-phosphomonoester.. Endonuclease that specifically degrades the RNA of RNA-DNA hybrids. The chain is Ribonuclease HI (rnhA) from Helicobacter pylori (strain J99 / ATCC 700824) (Campylobacter pylori J99).